The primary structure comprises 1072 residues: Guanylyl cyclase C (1072 aa).

The first 19 residues, 1 to 19 (MTSLLGLAVRLLLFQPALM), serve as a signal peptide directing secretion. Residues 20–433 (VFWASQVRQN…VPGLGPQILM (414 aa)) lie on the Extracellular side of the membrane. N-linked (GlcNAc...) asparagine glycans are attached at residues N32, N75, N79, N179, N188, N195, N284, N307, N345, and N402. A helical membrane pass occupies residues 434–454 (IAVFTLTGILVVLLLIALLVL). The Cytoplasmic segment spans residues 455–1072 (RKYRRDHALR…NNSDHDSTYF (618 aa)). The 260-residue stretch at 489–748 (LKIDDDRRRD…KIESTLAKIF (260 aa)) folds into the Protein kinase domain. The Guanylate cyclase domain occupies 823–953 (TIYFSDIVGF…DTVNTASRME (131 aa)).

The protein belongs to the adenylyl cyclase class-4/guanylyl cyclase family. As to quaternary structure, homotrimer. Interacts via its C-terminal region with NHERF4. Interacts with the lectin chaperone VIP36. In terms of processing, glycosylation at Asn-75 and/or Asn-79 is required for interaction with VIP36 while glycosylation at Asn-345 and Asn-402 modulates ligand-mediated GC-C activation.

It localises to the cell membrane. The protein resides in the endoplasmic reticulum membrane. It catalyses the reaction GTP = 3',5'-cyclic GMP + diphosphate. In terms of biological role, guanylyl cyclase that catalyzes synthesis of cyclic GMP (cGMP) from GTP. In Mus musculus (Mouse), this protein is Guanylyl cyclase C (Gucy2c).